The sequence spans 501 residues: Aldehyde dehydrogenase, cytosolic 1 (501 aa).

Ser-2 bears the N-acetylserine mark. Lys-91 and Lys-128 each carry N6-acetyllysine. Position 246–251 (246–251 (GSTEVG)) interacts with NAD(+). Lys-252 is subject to N6-acetyllysine. Glu-269 functions as the Proton acceptor in the catalytic mechanism. Cys-303 serves as the catalytic Nucleophile. Lys-353, Lys-367, and Lys-410 each carry N6-acetyllysine. The residue at position 413 (Ser-413) is a Phosphoserine. 2 positions are modified to N6-acetyllysine: Lys-419 and Lys-435.

Belongs to the aldehyde dehydrogenase family. As to quaternary structure, homotetramer. Highest level in liver, high level in lung, low level in kidney and testis.

It localises to the cytoplasm. The enzyme catalyses an aldehyde + NAD(+) + H2O = a carboxylate + NADH + 2 H(+). Its pathway is alcohol metabolism; ethanol degradation; acetate from ethanol: step 2/2. Functionally, can oxidize benzaldehyde, propionaldehyde and acetaldehyde. No detectable activity with retinal. The chain is Aldehyde dehydrogenase, cytosolic 1 from Mus musculus (Mouse).